A 59-amino-acid polypeptide reads, in one-letter code: Large ribosomal subunit protein uL30 (59 aa).

It belongs to the universal ribosomal protein uL30 family. In terms of assembly, part of the 50S ribosomal subunit.

The protein is Large ribosomal subunit protein uL30 of Aliivibrio salmonicida (strain LFI1238) (Vibrio salmonicida (strain LFI1238)).